The following is an 845-amino-acid chain: Probable inorganic carbon transporter subunit DabA (845 aa).

Residues 1–20 are disordered; it reads MPMASGDESMSARSENPVQS. The Zn(2+) site is built by cysteine 345, aspartate 347, histidine 516, and cysteine 531.

The protein belongs to the inorganic carbon transporter (TC 9.A.2) DabA family. Forms a complex with DabB. Zn(2+) serves as cofactor.

The protein resides in the cell inner membrane. Functionally, part of an energy-coupled inorganic carbon pump. The sequence is that of Probable inorganic carbon transporter subunit DabA from Azotobacter vinelandii (strain DJ / ATCC BAA-1303).